An 81-amino-acid polypeptide reads, in one-letter code: Mu/omega-theraphotoxin-Hs1a (81 aa).

Residues 1–21 (MRASMFLALAGLVLLFVVCYA) form the signal peptide. Positions 22-48 (SESEEKEFPRELLFKFFAVDDFKGEER) are excised as a propeptide. Intrachain disulfides connect Cys-50/Cys-65, Cys-57/Cys-70, and Cys-64/Cys-77.

This sequence belongs to the neurotoxin 10 (Hwtx-1) family. 23 (HwTx-I) subfamily. In terms of tissue distribution, expressed by the venom gland.

Its subcellular location is the secreted. Lethal toxin with multiple biological activities. Inhibits voltage-gated TTX-sensitive sodium channels in DRG neurons (IC(50)=55 nM) and also shows activity when directly tested on Nav1.7/SCN9A (IC(50)=25.1-630 nM). Inhibits N-type calcium channels (Cav2.2/CACNA1B (IC(50)=100 nM)). Also blocks neuromuscular transmission. In vivo, intrathecal injected toxin shows analgesic activity in the rat formalin-induced pain model, without induction of motor dysfunction in rats. The sequence is that of Mu/omega-theraphotoxin-Hs1a from Cyriopagopus schmidti (Chinese bird spider).